Here is a 539-residue protein sequence, read N- to C-terminus: Squalene monooxygenase SE1 (539 aa).

The next 2 membrane-spanning stretches (helical) occupy residues 22–42 and 71–91; these read LLIDQYFLGWIFAFLFGFLLL and IAGSTDVIIVGAGVAGSALAY. FAD-binding positions include 84 to 85, 104 to 105, R112, R183, V199, D361, and M374; these read VA and ER. The chain crosses the membrane as a helical span at residues 472–492; the sequence is LFLHFFAVAIYGVGRLLIPFP.

This sequence belongs to the squalene monooxygenase family. FAD serves as cofactor. In terms of tissue distribution, mostly expressed in flower buds and leaves, and, to a lower extent, at high levels thought, in roots and petioles. In petioles, preferentially observed in vascular bundle tissue (phloem cells and parenchymatous cells near xylem) and resin ducts.

The protein resides in the microsome membrane. It localises to the endoplasmic reticulum membrane. The catalysed reaction is squalene + reduced [NADPH--hemoprotein reductase] + O2 = (S)-2,3-epoxysqualene + oxidized [NADPH--hemoprotein reductase] + H2O + H(+). Its pathway is terpene metabolism; lanosterol biosynthesis; lanosterol from farnesyl diphosphate: step 2/3. In terms of biological role, component of the triterpene saponins (e.g. ginsenosides or panaxosides) and phytosterols biosynthetic pathways. Catalyzes the first oxygenation step in sterol biosynthesis and is suggested to be one of the rate-limiting enzymes in this pathway. This Panax ginseng (Korean ginseng) protein is Squalene monooxygenase SE1.